We begin with the raw amino-acid sequence, 154 residues long: Interleukin-2 (154 aa).

Positions 1–20 (MYRMQLLSCIALSLALVTNS) are cleaved as a signal peptide. O-linked (GalNAc...) threonine glycosylation occurs at Thr-23. A disulfide bond links Cys-78 and Cys-126.

It belongs to the IL-2 family.

It localises to the secreted. Functionally, cytokine produced by activated CD4-positive helper T-cells and to a lesser extend activated CD8-positive T-cells and natural killer (NK) cells that plays pivotal roles in the immune response and tolerance. Binds to a receptor complex composed of either the high-affinity trimeric IL-2R (IL2RA/CD25, IL2RB/CD122 and IL2RG/CD132) or the low-affinity dimeric IL-2R (IL2RB and IL2RG). Interaction with the receptor leads to oligomerization and conformation changes in the IL-2R subunits resulting in downstream signaling starting with phosphorylation of JAK1 and JAK3. In turn, JAK1 and JAK3 phosphorylate the receptor to form a docking site leading to the phosphorylation of several substrates including STAT5. This process leads to activation of several pathways including STAT, phosphoinositide-3-kinase/PI3K and mitogen-activated protein kinase/MAPK pathways. Functions as a T-cell growth factor and can increase NK-cell cytolytic activity as well. Promotes strong proliferation of activated B-cells and subsequently immunoglobulin production. Plays a pivotal role in regulating the adaptive immune system by controlling the survival and proliferation of regulatory T-cells, which are required for the maintenance of immune tolerance. Moreover, participates in the differentiation and homeostasis of effector T-cell subsets, including Th1, Th2, Th17 as well as memory CD8-positive T-cells. In Cercocebus atys (Sooty mangabey), this protein is Interleukin-2 (IL2).